A 457-amino-acid polypeptide reads, in one-letter code: Argininosuccinate lyase (457 aa).

The protein belongs to the lyase 1 family. Argininosuccinate lyase subfamily.

The protein resides in the cytoplasm. The enzyme catalyses 2-(N(omega)-L-arginino)succinate = fumarate + L-arginine. Its pathway is amino-acid biosynthesis; L-arginine biosynthesis; L-arginine from L-ornithine and carbamoyl phosphate: step 3/3. The chain is Argininosuccinate lyase from Cronobacter sakazakii (strain ATCC BAA-894) (Enterobacter sakazakii).